The primary structure comprises 244 residues: 14-3-3 protein homolog 1 (244 aa).

This sequence belongs to the 14-3-3 family.

In Echinococcus multilocularis (Fox tapeworm), this protein is 14-3-3 protein homolog 1.